The primary structure comprises 195 residues: GTP cyclohydrolase 1 (195 aa).

Positions 86, 89, and 158 each coordinate Zn(2+).

Belongs to the GTP cyclohydrolase I family. Homomer.

The enzyme catalyses GTP + H2O = 7,8-dihydroneopterin 3'-triphosphate + formate + H(+). It functions in the pathway cofactor biosynthesis; 7,8-dihydroneopterin triphosphate biosynthesis; 7,8-dihydroneopterin triphosphate from GTP: step 1/1. The chain is GTP cyclohydrolase 1 from Ruminiclostridium cellulolyticum (strain ATCC 35319 / DSM 5812 / JCM 6584 / H10) (Clostridium cellulolyticum).